The following is a 246-amino-acid chain: Bacteriorhodopsin-II-like protein (246 aa).

Transmembrane regions (helical) follow at residues 7 to 27 (EATW…YFAV), 45 to 65 (TLIP…LGVI), 82 to 102 (YADW…VAGA), 107 to 127 (LYKL…GSMM), 135 to 155 (IVWW…LLGE), 182 to 202 (WALY…IIAV), and 205 to 225 (EIML…AVLL). K217 carries the post-translational modification N6-(retinylidene)lysine.

The protein belongs to the archaeal/bacterial/fungal opsin family. Post-translationally, the covalent binding of retinal to the apoprotein, bacterioopsin, generates bacteriorhodopsin.

It is found in the cell membrane. Functionally, has no proton-pumping activity but is potentially capable of functioning as a sensory SRII-like protein. The chromophore contains 36.5% all-trans-, 7.6% 11-cis- and 56.4% 13-cis-retinal in the dark and 30.1% 11-cis- and 47.7% 13-cis-retinal upon illumination with &gt;460 nm light. The protein is Bacteriorhodopsin-II-like protein (bop2) of Haloquadratum walsbyi (strain DSM 16790 / HBSQ001).